A 500-amino-acid chain; its full sequence is Protein ASPARTIC PROTEASE IN GUARD CELL 1 (500 aa).

The signal sequence occupies residues 1 to 24 (MAFPRFLSLLAVVTLSLFLTTTDA). One can recognise a Peptidase A1 domain in the interval 162 to 496 (YFSRIGVGTP…DLSKNVIGLS (335 aa)). Asp-180 is an active-site residue. Intrachain disulfides connect Cys-190–Cys-193, Cys-196–Cys-271, Cys-217–Cys-235, Cys-222–Cys-230, Cys-307–Cys-500, and Cys-419–Cys-461. The active site involves Asp-379.

Belongs to the peptidase A1 family. As to expression, expressed in young seedlings, leaves, guard-cells, stems, flowers and siliques, but not in roots or mesophyll cells.

It is found in the endoplasmic reticulum. Its activity is regulated as follows. Inhibited by pepstatin A. Its function is as follows. Aspartic protease involved in drought avoidance through abscisic acid signaling. The sequence is that of Protein ASPARTIC PROTEASE IN GUARD CELL 1 (ASPG1) from Arabidopsis thaliana (Mouse-ear cress).